The sequence spans 236 residues: Protein N-lysine methyltransferase METTL21A (236 aa).

Residues W47, 73–75, D112, W143, and A161 contribute to the S-adenosyl-L-methionine site; that span reads GAG.

Belongs to the methyltransferase superfamily. METTL21 family. In terms of assembly, interacts with heat shock 70 family members; at least some of these proteins are methylation substrates.

The protein localises to the cytoplasm. The enzyme catalyses L-lysyl-[protein] + 3 S-adenosyl-L-methionine = N(6),N(6),N(6)-trimethyl-L-lysyl-[protein] + 3 S-adenosyl-L-homocysteine + 3 H(+). Functionally, protein-lysine methyltransferase that selectively trimethylates residues in heat shock protein 70 (HSP70) family members. Contributes to the in vivo trimethylation of Lys residues in HSPA1 and HSPA8. In vitro methylates 'Lys-561' in HSPA1, 'Lys-564' in HSPA2, 'Lys-585' in HSPA5, 'Lys-563' in HSPA6 and 'Lys-561' in HSPA8. The polypeptide is Protein N-lysine methyltransferase METTL21A (METTL21A) (Pongo abelii (Sumatran orangutan)).